The following is a 74-amino-acid chain: UPF0352 protein PM1884 (74 aa).

It belongs to the UPF0352 family.

The protein is UPF0352 protein PM1884 of Pasteurella multocida (strain Pm70).